We begin with the raw amino-acid sequence, 175 residues long: Ribulose bisphosphate carboxylase small subunit, chloroplastic 2 (175 aa).

A chloroplast-targeting transit peptide spans 1 to 46; it reads MAPAVMASSATTVAPFQGLKSTAGLPISCRSGSTGLSSVSNGGRIR.

The protein belongs to the RuBisCO small chain family. Heterohexadecamer of 8 large and 8 small subunits.

It localises to the plastid. The protein resides in the chloroplast. RuBisCO catalyzes two reactions: the carboxylation of D-ribulose 1,5-bisphosphate, the primary event in carbon dioxide fixation, as well as the oxidative fragmentation of the pentose substrate. Both reactions occur simultaneously and in competition at the same active site. Although the small subunit is not catalytic it is essential for maximal activity. The chain is Ribulose bisphosphate carboxylase small subunit, chloroplastic 2 from Triticum aestivum (Wheat).